A 138-amino-acid polypeptide reads, in one-letter code: Small ribosomal subunit protein bS6 (138 aa).

The disordered stretch occupies residues 94–138; it reads VKQDGPLPTPKPTSKENEPEKEEVKPTEEKTESPSKDEKKEDSKE. The segment covering 106–138 has biased composition (basic and acidic residues); that stretch reads TSKENEPEKEEVKPTEEKTESPSKDEKKEDSKE.

The protein belongs to the bacterial ribosomal protein bS6 family.

Functionally, binds together with bS18 to 16S ribosomal RNA. The polypeptide is Small ribosomal subunit protein bS6 (Prochlorococcus marinus (strain NATL2A)).